Here is a 483-residue protein sequence, read N- to C-terminus: Cysteine proteinase 1, mitochondrial (483 aa).

The N-terminal 30 residues, 1–30 (MLPTSVSWSLYLKTFRSHLLRAPQIVLKRM), are a transit peptide targeting the mitochondrion. Active-site residues include Cys102, His398, and Asn421. Position 483 (Lys483) is a propeptide, removed in mature form; by autocatalysis.

It belongs to the peptidase C1 family. As to quaternary structure, homohexamer. Binds to nucleic acids. Binds single-stranded DNA and RNA with higher affinity than double-stranded DNA. Post-translationally, the N-terminus of isoform Cytoplasmic is blocked.

The protein localises to the mitochondrion. Its subcellular location is the cytoplasm. The catalysed reaction is Inactivates bleomycin B2 (a cytotoxic glycometallopeptide) by hydrolysis of a carboxyamide bond of beta-aminoalanine, but also shows general aminopeptidase activity. The specificity varies somewhat with source, but amino acid arylamides of Met, Leu and Ala are preferred.. Inhibited by E64, a specific inhibitor of cysteine proteases, N-ethylmaleimide, iodacetamide, and mercury and zinc ions. Its function is as follows. The normal physiological role of the enzyme is unknown, but it is not essential for the viability of yeast cells. Has aminopeptidase activity, shortening substrate peptides sequentially by 1 amino acid. Has bleomycin hydrolase activity, which can protect the cell from the toxic effects of bleomycin. Has homocysteine-thiolactonase activity, protecting the cell against homocysteine toxicity. Acts as a repressor in the GAL4 regulatory system, but this does not require either the peptidase or nucleic acid-binding activities. The polypeptide is Cysteine proteinase 1, mitochondrial (LAP3) (Saccharomyces cerevisiae (strain YJM789) (Baker's yeast)).